A 131-amino-acid chain; its full sequence is Agouti-signaling protein (131 aa).

The first 22 residues, 1-22 (MDVTRLLLATLVGFLCFLTVHS), serve as a signal peptide directing secretion. A glycan (N-linked (GlcNAc...) asparagine) is linked at Asn39. The tract at residues 58 to 96 (KSKKISRKEAEKRKRSSKKKASIKKVARPPPPSPCVATR) is disordered. Over residues 70–84 (RKRSSKKKASIKKVA) the composition is skewed to basic residues. Disulfide bonds link Cys92–Cys107, Cys99–Cys113, Cys106–Cys124, Cys110–Cys131, and Cys115–Cys122. Residues 92–131 (CVATRDSCKPPAPACCNPCASCQCRFFGSACTCRVLNPNC) enclose the Agouti domain.

Its subcellular location is the secreted. Functionally, involved in the regulation of melanogenesis. The binding of ASP to MC1R precludes alpha-MSH initiated signaling and thus blocks production of cAMP, leading to a down-regulation of eumelanogenesis (brown/black pigment) and thus increasing synthesis of pheomelanin (yellow/red pigment). The protein is Agouti-signaling protein of Rattus norvegicus (Rat).